The sequence spans 403 residues: NADH-quinone oxidoreductase subunit D (403 aa).

This sequence belongs to the complex I 49 kDa subunit family. NDH-1 is composed of 14 different subunits. Subunits NuoB, C, D, E, F, and G constitute the peripheral sector of the complex.

Its subcellular location is the cell membrane. The catalysed reaction is a quinone + NADH + 5 H(+)(in) = a quinol + NAD(+) + 4 H(+)(out). Its function is as follows. NDH-1 shuttles electrons from NADH, via FMN and iron-sulfur (Fe-S) centers, to quinones in the respiratory chain. The immediate electron acceptor for the enzyme in this species is believed to be a menaquinone. Couples the redox reaction to proton translocation (for every two electrons transferred, four hydrogen ions are translocated across the cytoplasmic membrane), and thus conserves the redox energy in a proton gradient. The polypeptide is NADH-quinone oxidoreductase subunit D (Amoebophilus asiaticus (strain 5a2)).